We begin with the raw amino-acid sequence, 284 residues long: RNase adapter protein RapZ (284 aa).

An ATP-binding site is contributed by 8–15; it reads GRSGSGKS. Residue 56–59 coordinates GTP; the sequence is DVRN. Residues 266–284 are RNA-binding; it reads RSRGKNVQSRHRTLEKRKT.

Belongs to the RapZ-like family. RapZ subfamily. In terms of assembly, homotrimer.

Its function is as follows. Modulates the synthesis of GlmS, by affecting the processing and stability of the regulatory small RNA GlmZ. When glucosamine-6-phosphate (GlcN6P) concentrations are high in the cell, RapZ binds GlmZ and targets it to cleavage by RNase E. Consequently, GlmZ is inactivated and unable to activate GlmS synthesis. Under low GlcN6P concentrations, RapZ is sequestered and inactivated by an other regulatory small RNA, GlmY, preventing GlmZ degradation and leading to synthesis of GlmS. The protein is RNase adapter protein RapZ of Citrobacter koseri (strain ATCC BAA-895 / CDC 4225-83 / SGSC4696).